The chain runs to 221 residues: Ribonuclease 3 (221 aa).

One can recognise an RNase III domain in the interval 1-123; sequence MERTGHAFAD…LIAVLYLDGG (123 aa). E36 is a binding site for Mg(2+). D40 is a catalytic residue. Positions 109 and 112 each coordinate Mg(2+). E112 is an active-site residue. The region spanning 148–217 is the DRBM domain; sequence DAKTELQEWA…AAALLLREGV (70 aa).

It belongs to the ribonuclease III family. As to quaternary structure, homodimer. The cofactor is Mg(2+).

Its subcellular location is the cytoplasm. The enzyme catalyses Endonucleolytic cleavage to 5'-phosphomonoester.. Digests double-stranded RNA. Involved in the processing of primary rRNA transcript to yield the immediate precursors to the large and small rRNAs (23S and 16S). Processes some mRNAs, and tRNAs when they are encoded in the rRNA operon. Processes pre-crRNA and tracrRNA of type II CRISPR loci if present in the organism. This is Ribonuclease 3 from Mesorhizobium japonicum (strain LMG 29417 / CECT 9101 / MAFF 303099) (Mesorhizobium loti (strain MAFF 303099)).